The chain runs to 473 residues: Cucurbitadienol 11-hydroxylase (473 aa).

Residues 4–24 (VVLGLATLFVAYYIHWINKWR) form a helical membrane-spanning segment. Residue Cys422 participates in heme binding.

Belongs to the cytochrome P450 family. The cofactor is heme. As to expression, highly expressed in young fruits 15 days after anthesis (15-DAA). Also observed in roots.

Its subcellular location is the membrane. The enzyme catalyses cucurbitadienol + 2 reduced [NADPH--hemoprotein reductase] + 2 O2 = 11-oxocucurbitadienol + 2 oxidized [NADPH--hemoprotein reductase] + 3 H2O + 2 H(+). The catalysed reaction is cucurbitadienol + reduced [NADPH--hemoprotein reductase] + O2 = 11-hydroxycucurbitadienol + oxidized [NADPH--hemoprotein reductase] + H2O + H(+). It catalyses the reaction 11-hydroxycucurbitadienol + reduced [NADPH--hemoprotein reductase] + O2 = 11-oxocucurbitadienol + oxidized [NADPH--hemoprotein reductase] + 2 H2O + H(+). It carries out the reaction (24R)-24,25-dihydroxycucurbitadienol + reduced [NADPH--hemoprotein reductase] + O2 = mogrol + oxidized [NADPH--hemoprotein reductase] + H2O + H(+). Its pathway is secondary metabolite biosynthesis; terpenoid biosynthesis. Functionally, hydroxylase involved in the biosynthesis of cucurbitacin and mogroside tetracyclic triterpene natural products (e.g. siamenoside I and mogrosides IV, V and VI). Cucurbitacins have cytotoxic properties and exhibit deterrent taste as a defense barrier against herbivores. Mogrosides are nonsugar highly oxygenated compounds used as high-intensity zero-calorie sweeteners; they also possess pharmacological properties such as regulating immunity, lowering blood sugar and lipid levels, protecting the liver, and acting as antioxidants and antitumor agents. Catalyzes the oxidation of cucurbitadienol at the C-11 position to produce 11-oxocucurbitadienol, a possible biosynthetic intermediate from cucurbitadienol to mogrol. Also mediates the conversion of 24,25-dihydroxycucurbitadienol to mogrol. This is Cucurbitadienol 11-hydroxylase from Siraitia grosvenorii (Monk's fruit).